Here is a 461-residue protein sequence, read N- to C-terminus: GTPase Der (461 aa).

2 EngA-type G domains span residues 9–171 (KTIA…NLNK) and 200–371 (IQVG…ECFS). GTP-binding positions include 15–22 (GQPNVGKS), 62–66 (DTGGM), 123–126 (NKID), 206–213 (GRVNVGKS), 253–257 (DTAGI), and 317–320 (NKWD). The region spanning 372–456 (KRIPTSLLNS…PLILNAKDKK (85 aa)) is the KH-like domain.

The protein belongs to the TRAFAC class TrmE-Era-EngA-EngB-Septin-like GTPase superfamily. EngA (Der) GTPase family. Associates with the 50S ribosomal subunit.

GTPase that plays an essential role in the late steps of ribosome biogenesis. The sequence is that of GTPase Der from Helicobacter pylori (strain HPAG1).